Consider the following 153-residue polypeptide: Endoribonuclease YbeY (153 aa).

Residues His-116, His-120, and His-126 each coordinate Zn(2+).

This sequence belongs to the endoribonuclease YbeY family. Zn(2+) serves as cofactor.

It localises to the cytoplasm. Single strand-specific metallo-endoribonuclease involved in late-stage 70S ribosome quality control and in maturation of the 3' terminus of the 16S rRNA. This chain is Endoribonuclease YbeY, found in Clavibacter michiganensis subsp. michiganensis (strain NCPPB 382).